Reading from the N-terminus, the 112-residue chain is Chaperone NapD (112 aa).

It belongs to the NapD family. As to quaternary structure, interacts with the cytoplasmic NapA precursor.

The protein resides in the cytoplasm. Its function is as follows. Chaperone for NapA, the catalytic subunit of the periplasmic nitrate reductase. It binds directly and specifically to the twin-arginine signal peptide of NapA, preventing premature interaction with the Tat translocase and premature export. This Paracoccus pantotrophus (Thiosphaera pantotropha) protein is Chaperone NapD.